Consider the following 247-residue polypeptide: Triosephosphate isomerase (247 aa).

Substrate is bound at residue asparagine 10 to lysine 12. Histidine 92 (electrophile) is an active-site residue. Glutamate 164 serves as the catalytic Proton acceptor. Residues glycine 170, serine 209, and glycine 230 to glycine 231 each bind substrate.

It belongs to the triosephosphate isomerase family. Homodimer.

The protein resides in the cytoplasm. The catalysed reaction is D-glyceraldehyde 3-phosphate = dihydroxyacetone phosphate. Its pathway is carbohydrate biosynthesis; gluconeogenesis. It functions in the pathway carbohydrate degradation; glycolysis; D-glyceraldehyde 3-phosphate from glycerone phosphate: step 1/1. Involved in the gluconeogenesis. Catalyzes stereospecifically the conversion of dihydroxyacetone phosphate (DHAP) to D-glyceraldehyde-3-phosphate (G3P). In Alcanivorax borkumensis (strain ATCC 700651 / DSM 11573 / NCIMB 13689 / SK2), this protein is Triosephosphate isomerase.